The sequence spans 112 residues: Larval cuticle protein 4 (112 aa).

The first 16 residues, 1–16 (MFKILLVCALVALVAA), serve as a signal peptide directing secretion. A Chitin-binding type R&amp;R domain is found at 31 to 92 (ADGFVSKLVL…PQSDLLPTPP (62 aa)).

Functionally, component of the larval cuticle. The chain is Larval cuticle protein 4 (Lcp4) from Drosophila melanogaster (Fruit fly).